The primary structure comprises 418 residues: MSLVSNSIALIERGANEILKFDELERRLRSGRPLRIKAGFDPTSPDLHLGHTVLLNKMRQFQDLGHQVVFLIGDFTGMIGDPTGKNVTRKPLSREDVLANASTYEDQVFKVLDRTLTEVRFNSEWFEKMSAVDMIKLAAQHTVARMLERDDFAKRFASQQPIVIHEFLYPLIQGYDSIALRADVELGGTDQKFNLLMGRALQEHHGQPPQIVLTMPLLEGLDGVAKMSKSLGNYIGIKEPPIDIVTKTMKIGDDLMWRWIELLSFKISAAEAVALREAVAKSELNPREVKLRLAHELVSRFYDNAAAEKAIAGWQAVVTGQGNNNLLPLQKINVPADGVRLVALLTKSGLAPSNSEAMRKLKERAVRVDGIVVDDAHLHFVPGFEGLIQIGKRNFIKVRLVTSSESQEFPESNRIDKS.

The 'HIGH' region signature appears at 42 to 51; it reads PTSPDLHLGH. Residues 226 to 230 carry the 'KMSKS' region motif; the sequence is KMSKS. K229 provides a ligand contact to ATP. Residues 339 to 400 enclose the S4 RNA-binding domain; the sequence is VRLVALLTKS…GKRNFIKVRL (62 aa).

This sequence belongs to the class-I aminoacyl-tRNA synthetase family. TyrS type 2 subfamily. Homodimer.

It is found in the cytoplasm. The catalysed reaction is tRNA(Tyr) + L-tyrosine + ATP = L-tyrosyl-tRNA(Tyr) + AMP + diphosphate + H(+). Functionally, catalyzes the attachment of tyrosine to tRNA(Tyr) in a two-step reaction: tyrosine is first activated by ATP to form Tyr-AMP and then transferred to the acceptor end of tRNA(Tyr). This is Tyrosine--tRNA ligase from Xylella fastidiosa (strain Temecula1 / ATCC 700964).